Consider the following 461-residue polypeptide: Alpha-L-fucosidase (461 aa).

The signal sequence occupies residues 1–18; sequence MKMIIIFFILLILNLIKS.

The protein belongs to the glycosyl hydrolase 29 family.

It carries out the reaction an alpha-L-fucoside + H2O = L-fucose + an alcohol. Its function is as follows. Alpha-L-fucosidase is responsible for hydrolyzing the alpha-1,6-linked fucose joined to the reducing-end N-acetylglucosamine of the carbohydrate moieties of glycoproteins. The polypeptide is Alpha-L-fucosidase (alfA) (Dictyostelium discoideum (Social amoeba)).